Reading from the N-terminus, the 98-residue chain is Large ribosomal subunit protein bL28 (98 aa).

It belongs to the bacterial ribosomal protein bL28 family.

This Bartonella bacilliformis (strain ATCC 35685 / KC583 / Herrer 020/F12,63) protein is Large ribosomal subunit protein bL28.